Here is a 525-residue protein sequence, read N- to C-terminus: CBL-interacting protein kinase 21 (525 aa).

Residues Tyr87–Phe342 enclose the Protein kinase domain. ATP is bound by residues Leu93–Val101 and Lys116. Asp210 functions as the Proton acceptor in the catalytic mechanism. The activation loop stretch occupies residues Asp228–Glu257. One can recognise an NAF domain in the interval Asp372–Glu401. Residues Glu407–Val436 form a PPI region.

Belongs to the protein kinase superfamily. CAMK Ser/Thr protein kinase family. SNF1 subfamily. The cofactor is Mn(2+).

The enzyme catalyses L-seryl-[protein] + ATP = O-phospho-L-seryl-[protein] + ADP + H(+). The catalysed reaction is L-threonyl-[protein] + ATP = O-phospho-L-threonyl-[protein] + ADP + H(+). Its function is as follows. CIPK serine-threonine protein kinases interact with CBL proteins. Binding of a CBL protein to the regulatory NAF domain of CIPK protein lead to the activation of the kinase in a calcium-dependent manner. In Oryza sativa subsp. japonica (Rice), this protein is CBL-interacting protein kinase 21 (CIPK21).